The sequence spans 142 residues: Protein lin-32 (142 aa).

Over residues 30 to 48 (PLQSPNFSLDSPNYPDSLS) the composition is skewed to polar residues. The interval 30-66 (PLQSPNFSLDSPNYPDSLSNGGGKDDKKKCRRYKTPS) is disordered. In terms of domain architecture, bHLH spans 72–124 (MRRSAANERERRRMNTLNVAYDELREVLPEIDSGKKLSKFETLQMAQKYIECL).

Forms a heterodimer with hlh-2. As to expression, expressed in PVD motor neurons.

The protein resides in the nucleus. Functionally, probable transcription factor which binds the E box motif 5'-CA[TC][AG]TG-3'. Essential for the specification of the neuroblast cell fate in the development of peripheral sense organs. Its role in the generation of sensory neurons may be through positively regulating the expression of the zinc finger protein ztf-11 during postdeirid neurogenesis. Required for specification of cell fate, acting in concert with lin-32, in the development of the male-specific genital sensilla (simple sense organs) known as rays. Involved in regulating glial specification, perhaps by suppressing a glial fate in different lineages during early embryogenesis. The polypeptide is Protein lin-32 (Caenorhabditis elegans).